The sequence spans 257 residues: Putative hydro-lyase Bphy_2364 (257 aa).

This sequence belongs to the D-glutamate cyclase family.

The polypeptide is Putative hydro-lyase Bphy_2364 (Paraburkholderia phymatum (strain DSM 17167 / CIP 108236 / LMG 21445 / STM815) (Burkholderia phymatum)).